Reading from the N-terminus, the 137-residue chain is Large ribosomal subunit protein uL16 (137 aa).

It belongs to the universal ribosomal protein uL16 family. In terms of assembly, part of the 50S ribosomal subunit.

Its function is as follows. Binds 23S rRNA and is also seen to make contacts with the A and possibly P site tRNAs. The protein is Large ribosomal subunit protein uL16 of Sinorhizobium medicae (strain WSM419) (Ensifer medicae).